Here is a 284-residue protein sequence, read N- to C-terminus: Putative xyloglucan endotransglucosylase/hydrolase protein 13 (284 aa).

Residues M1–G24 form the signal peptide. A GH16 domain is found at S25–Y214. Residue E100 is the Nucleophile of the active site. E104 functions as the Proton donor in the catalytic mechanism. Residue E104 participates in xyloglucan binding. N108 carries N-linked (GlcNAc...) asparagine glycosylation. Xyloglucan-binding positions include H117–N119, N127–E129, D193–W194, and G198. Disulfide bonds link C223–C234 and C267–C281. R272 contacts xyloglucan.

This sequence belongs to the glycosyl hydrolase 16 family. XTH group 2 subfamily. Post-translationally, contains at least one intrachain disulfide bond essential for its enzymatic activity.

It is found in the secreted. The protein resides in the cell wall. Its subcellular location is the extracellular space. The protein localises to the apoplast. It catalyses the reaction breaks a beta-(1-&gt;4) bond in the backbone of a xyloglucan and transfers the xyloglucanyl segment on to O-4 of the non-reducing terminal glucose residue of an acceptor, which can be a xyloglucan or an oligosaccharide of xyloglucan.. Functionally, may catalyze xyloglucan endohydrolysis (XEH) and/or endotransglycosylation (XET). Cleaves and religates xyloglucan polymers, an essential constituent of the primary cell wall, and thereby participates in cell wall construction of growing tissues. The chain is Putative xyloglucan endotransglucosylase/hydrolase protein 13 (XTH13) from Arabidopsis thaliana (Mouse-ear cress).